The following is a 561-amino-acid chain: DNA ligase B (561 aa).

The active-site N6-AMP-lysine intermediate is the lysine 125.

The protein belongs to the NAD-dependent DNA ligase family. LigB subfamily.

The enzyme catalyses NAD(+) + (deoxyribonucleotide)n-3'-hydroxyl + 5'-phospho-(deoxyribonucleotide)m = (deoxyribonucleotide)n+m + AMP + beta-nicotinamide D-nucleotide.. Its function is as follows. Catalyzes the formation of phosphodiester linkages between 5'-phosphoryl and 3'-hydroxyl groups in double-stranded DNA using NAD as a coenzyme and as the energy source for the reaction. This chain is DNA ligase B, found in Salmonella arizonae (strain ATCC BAA-731 / CDC346-86 / RSK2980).